The following is a 172-amino-acid chain: MADETTNGAAAPADQQQQPVMPTLKIMAQFIRDMSFENIAAQKGVQGEGQPDIQVQVNLDAKKRTVEKQFEVAIKLNINAKTKESGDMIFGLELDYAGIFFIDNVPDEQMHPFLLIECPRMIFPFVRRIVSDVTRDGGFPPLNLDQIDFVALYRQEIARRAAAQQAAPSAEV.

It belongs to the SecB family. In terms of assembly, homotetramer, a dimer of dimers. One homotetramer interacts with 1 SecA dimer.

Its subcellular location is the cytoplasm. In terms of biological role, one of the proteins required for the normal export of preproteins out of the cell cytoplasm. It is a molecular chaperone that binds to a subset of precursor proteins, maintaining them in a translocation-competent state. It also specifically binds to its receptor SecA. This is Protein-export protein SecB from Dinoroseobacter shibae (strain DSM 16493 / NCIMB 14021 / DFL 12).